The chain runs to 706 residues: UvrABC system protein C (706 aa).

The region spanning 16–95 (VEPGVYRFRD…IKEFDPRFNV (80 aa)) is the GIY-YIG domain. In terms of domain architecture, UVR spans 208-243 (DRLAKDMEQQMTAAAEQLDFERAARLRDDISALKRA). Residues 651-706 (APQNGTAPDPAPGTGDPQTPADPHSAATAADIEDDRHATGATGPQMNGSEQQVDRV) are disordered. Over residues 692–706 (TGPQMNGSEQQVDRV) the composition is skewed to polar residues.

This sequence belongs to the UvrC family. As to quaternary structure, interacts with UvrB in an incision complex.

The protein resides in the cytoplasm. In terms of biological role, the UvrABC repair system catalyzes the recognition and processing of DNA lesions. UvrC both incises the 5' and 3' sides of the lesion. The N-terminal half is responsible for the 3' incision and the C-terminal half is responsible for the 5' incision. The chain is UvrABC system protein C from Mycolicibacterium smegmatis (strain ATCC 700084 / mc(2)155) (Mycobacterium smegmatis).